A 440-amino-acid chain; its full sequence is Protein FPV117 (440 aa).

Belongs to the poxviruses G5 family.

The chain is Protein FPV117 from Fowlpox virus (strain NVSL) (FPV).